Reading from the N-terminus, the 305-residue chain is MAGPAFRAAAVRVRVPATSANLGPGFDALGLSLGLYDDVVVRVADSGLHIDIAGEGSETLPRDERHLLARSLRTAFDLLGGQPRGLEIVCANRIPHGRGLGSSSAAICAGIVAARAVTIGGDGKLDDTALLELATEIEGHPDNVAACLLGGFTLSWMEGGAARAIRMEPADSIVPVVFVPGKAVLTETARGLLPRSVPHVDAAANAGRAALLVEALTRRPELLLPATEDRLHQEYRAPAMPESMALVERLRADGIPAVISGAGPTVLALADEASADKVARLAGEGWAANRLSLDARGASVLPLAA.

95 to 105 (PHGRGLGSSSA) lines the ATP pocket.

Belongs to the GHMP kinase family. Homoserine kinase subfamily.

It is found in the cytoplasm. The enzyme catalyses L-homoserine + ATP = O-phospho-L-homoserine + ADP + H(+). It participates in amino-acid biosynthesis; L-threonine biosynthesis; L-threonine from L-aspartate: step 4/5. In terms of biological role, catalyzes the ATP-dependent phosphorylation of L-homoserine to L-homoserine phosphate. This Streptomyces avermitilis (strain ATCC 31267 / DSM 46492 / JCM 5070 / NBRC 14893 / NCIMB 12804 / NRRL 8165 / MA-4680) protein is Homoserine kinase.